We begin with the raw amino-acid sequence, 118 residues long: uncharacterized protein (118 aa).

The helical transmembrane segment at 21–38 threads the bilayer; the sequence is IVYFFFFFGLETFFSIIN.

Its subcellular location is the membrane. This is an uncharacterized protein from Dictyostelium discoideum (Social amoeba).